The sequence spans 261 residues: MALLQLEGIGAHYPGAAAPVLENINLSLGPQQLLVALGPSGSGKTSLLNLIAGFVTPSGGRITLDGSAVEGPGAERGVVFQDNALLPWQDVLANVAFGLELAGVSRSEREAKAREMLALVDLIGFEQRRIWELSGGQRQRVGLARALAADPRILLMDEPFGALDAFTREQMQELLLQVWQRTAKPVFLITHDIEEAVFLATDLILLAPDPGRIAQHLQLDFGRRYSAGESARAIKSDPGFIETREQVLASVFAQRAGEQRA.

The ABC transporter domain occupies Leu4–Ala233. Gly38–Thr45 contacts ATP.

The protein belongs to the ABC transporter superfamily. Taurine importer (TC 3.A.1.17.1) family. As to quaternary structure, the complex is composed of two ATP-binding proteins (TauB), two transmembrane proteins (TauC) and a solute-binding protein (TauA).

The protein localises to the cell inner membrane. It catalyses the reaction taurine(out) + ATP + H2O = taurine(in) + ADP + phosphate + H(+). Functionally, part of the ABC transporter complex TauABC involved in taurine import. Responsible for energy coupling to the transport system. This chain is Taurine import ATP-binding protein TauB, found in Pseudomonas syringae pv. tomato (strain ATCC BAA-871 / DC3000).